We begin with the raw amino-acid sequence, 127 residues long: uncharacterized protein (127 aa).

A signal peptide spans 1-26; that stretch reads MKAIYALLAVVALALVAVSLFSQSDS.

This is an uncharacterized protein from Archaeoglobus fulgidus (strain ATCC 49558 / DSM 4304 / JCM 9628 / NBRC 100126 / VC-16).